The primary structure comprises 305 residues: tRNA dimethylallyltransferase (305 aa).

8-15 provides a ligand contact to ATP; it reads GPTGTGKS. 10–15 is a binding site for substrate; sequence TGTGKS.

This sequence belongs to the IPP transferase family. Monomer. Requires Mg(2+) as cofactor.

The catalysed reaction is adenosine(37) in tRNA + dimethylallyl diphosphate = N(6)-dimethylallyladenosine(37) in tRNA + diphosphate. In terms of biological role, catalyzes the transfer of a dimethylallyl group onto the adenine at position 37 in tRNAs that read codons beginning with uridine, leading to the formation of N6-(dimethylallyl)adenosine (i(6)A). The protein is tRNA dimethylallyltransferase of Mycobacterium sp. (strain KMS).